Here is a 422-residue protein sequence, read N- to C-terminus: MSVCTTAPSATAPDIIRQRGQRTVFCGLTGIVWLHRRIQDAFFLVVGSRTCAHLVQSAAGVMIFAEPRFATAIIEERDLAGRADLDDELDRVVTRLIERRPDIKLLFLVGSCPSEVIKLDLTRAAARLDERFGRLPRILAYSGSGIETTFTEGEDACLEALVPTLADAGSTTSLMVVGAVADIVEDQFRRLFTAIGIERVDFLPARHAGAMPAVGPHTKFILAQPFLAATARALHERGARRIAAPYPLGAEGTRLWIEAAAAAFGIDPARTESVLALPARRATESLAAVRAKLAGRKIFFFPDSQLEIPLARFLARECGVELVEVGTPFLHRDLMDAELALLPFATQLSEGQDVERQLDRCRAEQPDLVICGLGLANPLEAEGIATKWSIELVFSPIHGFEQAADLANLFARPLARRALLSV.

[4Fe-4S] cluster-binding residues include cysteine 26, cysteine 51, and cysteine 112.

The protein belongs to the BchN/ChlN family. As to quaternary structure, protochlorophyllide reductase is composed of three subunits; BchL, BchN and BchB. Forms a heterotetramer of two BchB and two BchN subunits. It depends on [4Fe-4S] cluster as a cofactor.

The catalysed reaction is chlorophyllide a + oxidized 2[4Fe-4S]-[ferredoxin] + 2 ADP + 2 phosphate = protochlorophyllide a + reduced 2[4Fe-4S]-[ferredoxin] + 2 ATP + 2 H2O. It functions in the pathway porphyrin-containing compound metabolism; bacteriochlorophyll biosynthesis (light-independent). Component of the dark-operative protochlorophyllide reductase (DPOR) that uses Mg-ATP and reduced ferredoxin to reduce ring D of protochlorophyllide (Pchlide) to form chlorophyllide a (Chlide). This reaction is light-independent. The NB-protein (BchN-BchB) is the catalytic component of the complex. The sequence is that of Light-independent protochlorophyllide reductase subunit N from Acidiphilium rubrum.